Reading from the N-terminus, the 874-residue chain is Translation initiation factor IF-2 (874 aa).

Positions 1–289 are disordered; sequence MKIKNAQLTK…KHYDEHSVQR (289 aa). Over residues 31–48 the composition is skewed to basic and acidic residues; that stretch reads SSSEKPTTKVPEKVAKEK. A compositionally biased stretch (polar residues) spans 81-104; that stretch reads RSSFASEDSTIPSPVSVDTESTAF. Residues 105–118 are compositionally biased toward low complexity; it reads SPPVVEEVVSPLES. Composition is skewed to basic and acidic residues over residues 144 to 158 and 186 to 198; these read PPKK…KEPP and PKKE…KERT. A compositionally biased stretch (polar residues) spans 199–211; the sequence is GTVQTKPQQSSEV. A compositionally biased stretch (basic and acidic residues) spans 228 to 260; that stretch reads YRRDTSKRPGSDFRDRSKKDDSPKAFTGRDRYG. Basic residues predominate over residues 271–280; that stretch reads RKKRVQKTKK. Positions 380–549 constitute a tr-type G domain; it reads IRPPIVAFMG…ALQAEVLELK (170 aa). A G1 region spans residues 389-396; that stretch reads GHVDHGKT. 389-396 is a GTP binding site; that stretch reads GHVDHGKT. Residues 414–418 are G2; sequence AITQH. Residues 435 to 438 form a G3 region; sequence DTPG. GTP-binding positions include 435-439 and 489-492; these read DTPGH and NKCD. The interval 489–492 is G4; it reads NKCD. The segment at 525 to 527 is G5; it reads SAK.

This sequence belongs to the TRAFAC class translation factor GTPase superfamily. Classic translation factor GTPase family. IF-2 subfamily.

The protein localises to the cytoplasm. One of the essential components for the initiation of protein synthesis. Protects formylmethionyl-tRNA from spontaneous hydrolysis and promotes its binding to the 30S ribosomal subunits. Also involved in the hydrolysis of GTP during the formation of the 70S ribosomal complex. The chain is Translation initiation factor IF-2 from Chlamydia abortus (strain DSM 27085 / S26/3) (Chlamydophila abortus).